The primary structure comprises 554 residues: Laccase-8 (554 aa).

Residues 1-21 (MASAAMLVPLVLVLCTAAASA) form the signal peptide. 2 consecutive Plastocyanin-like domains span residues 29–145 (KVGG…PRNG) and 156–309 (EEIP…YKGV). Cu cation is bound by residues H79 and H81. N107 and N113 each carry an N-linked (GlcNAc...) asparagine glycan. Residues H124 and H126 each contribute to the Cu cation site. N271 and N369 each carry an N-linked (GlcNAc...) asparagine glycan. The Plastocyanin-like 3 domain maps to 411–537 (DFPDFPPPMQ…AMVFEVLNGP (127 aa)). Cu cation-binding residues include H455, H458, H460, H516, C517, H518, and H522.

Belongs to the multicopper oxidase family. Cu cation serves as cofactor.

The protein localises to the secreted. It is found in the extracellular space. The protein resides in the apoplast. The catalysed reaction is 4 hydroquinone + O2 = 4 benzosemiquinone + 2 H2O. In terms of biological role, lignin degradation and detoxification of lignin-derived products. In Oryza sativa subsp. japonica (Rice), this protein is Laccase-8 (LAC8).